The following is a 484-amino-acid chain: Glutamate--tRNA ligase (484 aa).

Positions Pro-11–Asn-21 match the 'HIGH' region motif. The short motif at Lys-255–Arg-259 is the 'KMSKS' region element. Lys-258 is a binding site for ATP.

This sequence belongs to the class-I aminoacyl-tRNA synthetase family. Glutamate--tRNA ligase type 1 subfamily. Monomer.

The protein localises to the cytoplasm. It catalyses the reaction tRNA(Glu) + L-glutamate + ATP = L-glutamyl-tRNA(Glu) + AMP + diphosphate. Its function is as follows. Catalyzes the attachment of glutamate to tRNA(Glu) in a two-step reaction: glutamate is first activated by ATP to form Glu-AMP and then transferred to the acceptor end of tRNA(Glu). This Streptococcus suis (strain 98HAH33) protein is Glutamate--tRNA ligase.